The sequence spans 542 residues: Delta 8-(E)-sphingolipid desaturase (542 aa).

Residues 1–75 (MVVSREEVRE…FKRWSIGRVK (75 aa)) enclose the Cytochrome b5 heme-binding domain. Heme contacts are provided by histidine 35 and histidine 58. A run of 2 helical transmembrane segments spans residues 215-235 (WYTLSAISIGLMWQQLVFIAH) and 248-268 (IDNIIGIIIANFIGGLSLGWW). Residues 235 to 239 (HDAGH) carry the Histidine box-1 motif. The short motif at 272-276 (HNVHH) is the Histidine box-2 element. A run of 3 helical transmembrane segments spans residues 329-346 (LYYPILSFGRFNLYRLSW), 360-380 (AAWFRYLELIGLCFFSYWFFY), and 393-413 (FWFLLISHWTTMIVHVQIVLS). A Histidine box-3 motif is present at residues 455-459 (QAIHH).

This sequence belongs to the fatty acid desaturase type 1 family.

It is found in the membrane. It carries out the reaction an N-acylsphing-4-enine + 2 Fe(II)-[cytochrome b5] + O2 + 2 H(+) = a (4E,8E)-4-sphinga-4,8-dienine ceramide + 2 Fe(III)-[cytochrome b5] + 2 H2O. It participates in lipid metabolism; sphingolipid metabolism. Delta(8)-fatty-acid desaturase which introduces a double bond at the 8-position in the long-chain base (LCB) of ceramides. Required for the formation of the di-unsaturated sphingoid base (E,E)-sphinga-4,8-dienine during glucosylceramide (GluCer) biosynthesis. The polypeptide is Delta 8-(E)-sphingolipid desaturase (Komagataella phaffii (strain GS115 / ATCC 20864) (Yeast)).